We begin with the raw amino-acid sequence, 335 residues long: Non-structural protein P9-1 (335 aa).

Residues Phe27–Gln42 are compositionally biased toward low complexity. The segment at Phe27–Thr48 is disordered.

In Fiji disease virus (isolate Sugarcane) (FDV), this protein is Non-structural protein P9-1 (S9).